A 320-amino-acid chain; its full sequence is Annexin A5 (320 aa).

At A2 the chain carries N-acetylalanine. Annexin repeat units follow at residues 15-86 (FDER…ALMK), 87-158 (PSRL…VLLQ), 170-242 (AQVE…AVVK), and 246-317 (SIPA…LLCG). A Glycyl lysine isopeptide (Lys-Gly) (interchain with G-Cter in SUMO1); alternate cross-link involves residue K29. K29 participates in a covalent cross-link: Glycyl lysine isopeptide (Lys-Gly) (interchain with G-Cter in SUMO2); alternate. S37 is subject to Phosphoserine. 5 positions are modified to N6-acetyllysine: K70, K76, K79, K97, and K101. Position 290 is an N6-succinyllysine (K290). A [IL]-x-C-x-x-[DE] motif motif is present at residues 314 to 320 (LLCGGED).

Belongs to the annexin family. As to quaternary structure, monomer. Binds ATRX and EIF5B. Post-translationally, S-nitrosylation is induced by interferon-gamma and oxidatively-modified low-densitity lipoprotein (LDL(ox)) possibly implicating the iNOS-S100A8/9 transnitrosylase complex.

Functionally, this protein is an anticoagulant protein that acts as an indirect inhibitor of the thromboplastin-specific complex, which is involved in the blood coagulation cascade. In Macaca fascicularis (Crab-eating macaque), this protein is Annexin A5 (ANXA5).